Here is a 283-residue protein sequence, read N- to C-terminus: Tryptophan 2,3-dioxygenase (283 aa).

Residues 52-56 (FIIQH), Tyr114, and Arg118 contribute to the substrate site. His241 serves as a coordination point for heme. Thr255 is a substrate binding site.

Belongs to the tryptophan 2,3-dioxygenase family. In terms of assembly, homotetramer. It depends on heme as a cofactor.

The enzyme catalyses L-tryptophan + O2 = N-formyl-L-kynurenine. It participates in amino-acid degradation; L-tryptophan degradation via kynurenine pathway; L-kynurenine from L-tryptophan: step 1/2. In terms of biological role, heme-dependent dioxygenase that catalyzes the oxidative cleavage of the L-tryptophan (L-Trp) pyrrole ring and converts L-tryptophan to N-formyl-L-kynurenine. Catalyzes the oxidative cleavage of the indole moiety. This is Tryptophan 2,3-dioxygenase from Pseudomonas fluorescens (strain ATCC BAA-477 / NRRL B-23932 / Pf-5).